We begin with the raw amino-acid sequence, 133 residues long: Large ribosomal subunit protein bL20 (133 aa).

This sequence belongs to the bacterial ribosomal protein bL20 family.

Its function is as follows. Binds directly to 23S ribosomal RNA and is necessary for the in vitro assembly process of the 50S ribosomal subunit. It is not involved in the protein synthesizing functions of that subunit. In Bartonella bacilliformis (strain ATCC 35685 / KC583 / Herrer 020/F12,63), this protein is Large ribosomal subunit protein bL20.